Here is a 606-residue protein sequence, read N- to C-terminus: tRNA 5-methylaminomethyl-2-thiouridine biosynthesis bifunctional protein MnmC (606 aa).

The interval 1 to 237 (MNSNSSVQFN…KRDMLCGHYL (237 aa)) is tRNA (mnm(5)s(2)U34)-methyltransferase. Residues 254–606 (IGGGISAACS…RRISVSRFKG (353 aa)) are FAD-dependent cmnm(5)s(2)U34 oxidoreductase.

This sequence in the N-terminal section; belongs to the methyltransferase superfamily. tRNA (mnm(5)s(2)U34)-methyltransferase family. In the C-terminal section; belongs to the DAO family. FAD serves as cofactor.

It is found in the cytoplasm. The enzyme catalyses 5-aminomethyl-2-thiouridine(34) in tRNA + S-adenosyl-L-methionine = 5-methylaminomethyl-2-thiouridine(34) in tRNA + S-adenosyl-L-homocysteine + H(+). Catalyzes the last two steps in the biosynthesis of 5-methylaminomethyl-2-thiouridine (mnm(5)s(2)U) at the wobble position (U34) in tRNA. Catalyzes the FAD-dependent demodification of cmnm(5)s(2)U34 to nm(5)s(2)U34, followed by the transfer of a methyl group from S-adenosyl-L-methionine to nm(5)s(2)U34, to form mnm(5)s(2)U34. The chain is tRNA 5-methylaminomethyl-2-thiouridine biosynthesis bifunctional protein MnmC from Idiomarina loihiensis (strain ATCC BAA-735 / DSM 15497 / L2-TR).